The sequence spans 386 residues: Formate-dependent phosphoribosylglycinamide formyltransferase (386 aa).

N(1)-(5-phospho-beta-D-ribosyl)glycinamide-binding positions include 15–16 (EL) and glutamate 75. ATP contacts are provided by residues arginine 107, lysine 148, 153-158 (SSGKGQ), 188-191 (EQFI), and glutamate 196. The region spanning 112–301 (ALAAQQLNLQ…EFELHLRAIV (190 aa)) is the ATP-grasp domain. Mg(2+)-binding residues include glutamate 260 and glutamate 272. N(1)-(5-phospho-beta-D-ribosyl)glycinamide is bound by residues aspartate 279, lysine 349, and 356-357 (RR).

Belongs to the PurK/PurT family. As to quaternary structure, homodimer.

The enzyme catalyses N(1)-(5-phospho-beta-D-ribosyl)glycinamide + formate + ATP = N(2)-formyl-N(1)-(5-phospho-beta-D-ribosyl)glycinamide + ADP + phosphate + H(+). It participates in purine metabolism; IMP biosynthesis via de novo pathway; N(2)-formyl-N(1)-(5-phospho-D-ribosyl)glycinamide from N(1)-(5-phospho-D-ribosyl)glycinamide (formate route): step 1/1. Involved in the de novo purine biosynthesis. Catalyzes the transfer of formate to 5-phospho-ribosyl-glycinamide (GAR), producing 5-phospho-ribosyl-N-formylglycinamide (FGAR). Formate is provided by PurU via hydrolysis of 10-formyl-tetrahydrofolate. The chain is Formate-dependent phosphoribosylglycinamide formyltransferase from Francisella tularensis subsp. tularensis (strain WY96-3418).